A 551-amino-acid polypeptide reads, in one-letter code: Structure-specific endonuclease subunit MUS81 (551 aa).

Disordered stretches follow at residues 84-131 and 229-259; these read HLAS…VGYW and FRPE…QQRP. Residues 92 to 107 are compositionally biased toward low complexity; the sequence is APSSPSGKKGASKGPP. Residue S95 is modified to Phosphoserine. The span at 110–131 shows a compositional bias: polar residues; it reads VQDSSMPVPTQPQAGSTSVGYW. The interval 124-244 is interaction with BLM; it reads GSTSVGYWPA…HGEDSAVPEA (121 aa). Positions 131 to 230 are winged helix domain (WHD); critical for endonuclease activity; the sequence is WPAQNSGARE…GLSTRHAGFR (100 aa). Residues 229 to 238 are compositionally biased toward basic and acidic residues; the sequence is FRPEEHHGED. In terms of domain architecture, ERCC4 spans 270–372; the sequence is LLCVDIGETR…HRVYLVEEHG (103 aa). Residues D274, E277, and D307 contribute to the active site. The Mg(2+) site is built by D274, E277, D307, E333, and R334. Residues 471–545 form a helix-hairpin-helix (2HhH); involved in DNA recognition and bending region; sequence VREVFARQLM…LSRTLYQLYC (75 aa).

Belongs to the XPF family. As to quaternary structure, part of the heterodimeric DNA structure-specific endonuclease complex MUS81-EME1. Part of the heterodimeric DNA structure-specific endonuclease complex MUS81-EME2. Interacts with BLM; may stimulate the endonuclease activity of MUS81. Interacts with SLX4/BTBD12; this interaction is direct and links the MUS81-EME1 complex to SLX4, which may coordinate the action of the structure-specific endonuclease during DNA repair. Interacts with DCLRE1B/Apollo. Interacts with RECQL5; this interaction stimulates mitotic DNA synthesis. Interacts with CHEK2. Mg(2+) serves as cofactor. Expressed highly in testis. Expressed also in bone marrow, brain, thymus and to a lesser extent in heart and skeletal muscle, colon, kidney and spleen.

The protein localises to the nucleus. It is found in the nucleolus. In terms of biological role, catalytic subunit of two functionally distinct, structure-specific, heterodimeric DNA endonucleases MUS81-EME1 and MUS81-EME2 that are involved in the maintenance of genome stability. Both endonucleases have essentially the same substrate specificity though MUS81-EME2 is more active than its MUS81-EME1 counterpart. Both cleave 3'-flaps and nicked Holliday junctions, and exhibit limited endonuclease activity with 5' flaps and nicked double-stranded DNAs. MUS81-EME2 which is active during the replication of DNA is more specifically involved in replication fork processing. Replication forks frequently encounter obstacles to their passage, including DNA base lesions, DNA interstrand cross-links, difficult-to-replicate sequences, transcription bubbles, or tightly bound proteins. One mechanism for the restart of a stalled replication fork involves nucleolytic cleavage mediated by the MUS81-EME2 endonuclease. By acting upon the stalled fork, MUS81-EME2 generates a DNA double-strand break (DSB) that can be repaired by homologous recombination, leading to the restoration of an active fork. MUS81-EME2 could also function in telomere maintenance. MUS81-EME1, on the other hand, is active later in the cell cycle and functions in the resolution of mitotic recombination intermediates including the Holliday junctions, the four-way DNA intermediates that form during homologous recombination. The protein is Structure-specific endonuclease subunit MUS81 of Mus musculus (Mouse).